The chain runs to 315 residues: Homoserine kinase (315 aa).

Residue 96 to 106 coordinates ATP; that stretch reads PHSRGLGSSAA.

Belongs to the GHMP kinase family. Homoserine kinase subfamily.

The protein localises to the cytoplasm. The enzyme catalyses L-homoserine + ATP = O-phospho-L-homoserine + ADP + H(+). The protein operates within amino-acid biosynthesis; L-threonine biosynthesis; L-threonine from L-aspartate: step 4/5. Catalyzes the ATP-dependent phosphorylation of L-homoserine to L-homoserine phosphate. The polypeptide is Homoserine kinase (Mycolicibacterium paratuberculosis (strain ATCC BAA-968 / K-10) (Mycobacterium paratuberculosis)).